The sequence spans 353 residues: UPF0324 membrane protein PP_3661 (353 aa).

Helical transmembrane passes span 20–42 (LNGILFVALFAVAVTQLAAMPAI), 70–92 (ASWAAGINFSARGLLRIAVAFFG), 105–127 (WSGLIVSVLVVTSTLLIGLWCGM), 137–159 (ALLTAAGSAICGAAAVLAFESAL), 166–188 (SAMAVGSVVLFGTLSMFLYPLAI), 234–253 (MTRVMLLVPVLLVVGLWISR), 266–288 (IAMPWFAFGFLALVLVNSMQVLP), and 326–348 (ALATGAILNLWLVGGGLAITLGV).

This sequence belongs to the UPF0324 family.

Its subcellular location is the cell membrane. This chain is UPF0324 membrane protein PP_3661, found in Pseudomonas putida (strain ATCC 47054 / DSM 6125 / CFBP 8728 / NCIMB 11950 / KT2440).